Reading from the N-terminus, the 238-residue chain is MKSLHAVNLVLLLLLACFAPAPATRELNLRAAASDSTRVVDNATTERLLRAHSSGKEEQKEEEERAISINFPSLEKILKNVTSGKSTELQGMLKADEALGSAFKTLKLSTMRIGKDDTKMVAKFLSSRNFKIWFQHAVKINKDDPYGEMLKALTNVFGEKNVAMMILVGNLSRNSRDVAKKLEKAQFYKWYFVDKYKTADEVFTNVLKADRNRIHGYGREKEIWGDYAKYVTTTVMKY.

A signal peptide spans 1 to 23 (MKSLHAVNLVLLLLLACFAPAPA). The short motif at 47 to 65 (RLLRAHSSGKEEQKEEEER) is the RxLR-dEER element.

Belongs to the RxLR effector family.

Its subcellular location is the secreted. The protein resides in the host cytoplasm. The protein localises to the host cytoskeleton. It is found in the host nucleus. It localises to the host nucleolus. In terms of biological role, effector that enhances P.infestans colonization of Nicotiana benthamiana leaves. This chain is RxLR effector protein PITG_14788, found in Phytophthora infestans (strain T30-4) (Potato late blight agent).